The primary structure comprises 355 residues: Sulfate/thiosulfate import ATP-binding protein CysA (355 aa).

In terms of domain architecture, ABC transporter spans 3–233 (IIINNVSKQF…PASPFVMGFI (231 aa)). 35–42 (GPSGSGKS) is a binding site for ATP.

Belongs to the ABC transporter superfamily. Sulfate/tungstate importer (TC 3.A.1.6) family. In terms of assembly, the complex is composed of two ATP-binding proteins (CysA), two transmembrane proteins (CysT and CysW) and a solute-binding protein (CysP).

The protein resides in the cell inner membrane. It carries out the reaction sulfate(out) + ATP + H2O = sulfate(in) + ADP + phosphate + H(+). The catalysed reaction is thiosulfate(out) + ATP + H2O = thiosulfate(in) + ADP + phosphate + H(+). Part of the ABC transporter complex CysAWTP involved in sulfate/thiosulfate import. Responsible for energy coupling to the transport system. The polypeptide is Sulfate/thiosulfate import ATP-binding protein CysA (Synechocystis sp. (strain ATCC 27184 / PCC 6803 / Kazusa)).